Reading from the N-terminus, the 160-residue chain is Transcription elongation factor GreA (160 aa).

Positions 1–72 (MAEKTYPMTL…QISSLETKIR (72 aa)) form a coiled coil.

Belongs to the GreA/GreB family.

Necessary for efficient RNA polymerase transcription elongation past template-encoded arresting sites. The arresting sites in DNA have the property of trapping a certain fraction of elongating RNA polymerases that pass through, resulting in locked ternary complexes. Cleavage of the nascent transcript by cleavage factors such as GreA or GreB allows the resumption of elongation from the new 3'terminus. GreA releases sequences of 2 to 3 nucleotides. This is Transcription elongation factor GreA from Streptococcus gordonii (strain Challis / ATCC 35105 / BCRC 15272 / CH1 / DL1 / V288).